A 1763-amino-acid chain; its full sequence is Non-reducing polyketide synthase PKS19 (1763 aa).

The segment at 20–261 (GDQRNLFRKL…PMKKVQGMWH (242 aa)) is N-terminal acylcarrier protein transacylase domain (SAT). Residues 390–822 (SSKIAVVGMA…GGNTSIIIEE (433 aa)) enclose the Ketosynthase family 3 (KS3) domain. Catalysis depends on for beta-ketoacyl synthase activity residues cysteine 561, histidine 696, and histidine 740. Positions 922 to 1227 (FAFTGQGTFY…QRDTDNWLTL (306 aa)) are malonyl-CoA:ACP transacylase (MAT) domain. An N-terminal hotdog fold region spans residues 1307-1439 (HRLISEQYTD…VFYEDPSSWL (133 aa)). Positions 1307–1609 (HRLISEQYTD…FLQWPRVMLN (303 aa)) constitute a PKS/mFAS DH domain. A product template (PT) domain region spans residues 1334 to 1588 (GVVDGHAMNG…FVGDVYVLQG (255 aa)). Histidine 1339 functions as the Proton acceptor; for dehydratase activity in the catalytic mechanism. The interval 1461–1609 (VTGKASKLTT…FLQWPRVMLN (149 aa)) is C-terminal hotdog fold. The Proton donor; for dehydratase activity role is filled by aspartate 1522. The segment at 1619-1690 (AKPAAKVPGK…MEELPSPPAG (72 aa)) is disordered. Residues 1635 to 1647 (PHFKPHHVSRHKP) show a composition bias toward basic residues. In terms of domain architecture, Carrier spans 1689–1763 (AGMNDDMEKA…TIQDLKALLR (75 aa)). Position 1726 is an O-(pantetheine 4'-phosphoryl)serine (serine 1726).

Its function is as follows. Non-reducing polyketide synthase that mediates the biosynthesis of alternariol (AOH), a micotoxin that seems not to be involved in virulence and oxidative stress tolerance. PKS19 alone is sufficient for AOH synthesis which is initiated by priming with acetyl-CoA, followed by sequential condensations of 6 malonyl-CoA units. This is Non-reducing polyketide synthase PKS19 from Phaeosphaeria nodorum (strain SN15 / ATCC MYA-4574 / FGSC 10173) (Glume blotch fungus).